Here is a 266-residue protein sequence, read N- to C-terminus: Probable matrix protein (266 aa).

The disordered stretch occupies residues 158–177 (ACSAGTGGTEEGDSDTEEEP). Residues 167–177 (EEGDSDTEEEP) are compositionally biased toward acidic residues.

Its subcellular location is the virion. May play a role in virion budding and release by binding the ribonucleocapsid and the host membrane. The polypeptide is Probable matrix protein (Ixodidae (hardbacked ticks)).